Consider the following 180-residue polypeptide: Shikimate kinase (180 aa).

14–19 lines the ATP pocket; the sequence is GAGKTC. Residue T18 coordinates Mg(2+). Residues D36, R60, and G82 each contribute to the substrate site. R120 serves as a coordination point for ATP. R139 is a substrate binding site.

It belongs to the shikimate kinase family. Monomer. Mg(2+) is required as a cofactor.

Its subcellular location is the cytoplasm. It carries out the reaction shikimate + ATP = 3-phosphoshikimate + ADP + H(+). It participates in metabolic intermediate biosynthesis; chorismate biosynthesis; chorismate from D-erythrose 4-phosphate and phosphoenolpyruvate: step 5/7. Catalyzes the specific phosphorylation of the 3-hydroxyl group of shikimic acid using ATP as a cosubstrate. In Stenotrophomonas maltophilia (strain K279a), this protein is Shikimate kinase.